The following is a 73-amino-acid chain: Translation initiation factor IF-1 (73 aa).

In terms of domain architecture, S1-like spans 1 to 72 (MPKKDAIEVE…TRGRVTYRFK (72 aa)).

It belongs to the IF-1 family. As to quaternary structure, component of the 30S ribosomal translation pre-initiation complex which assembles on the 30S ribosome in the order IF-2 and IF-3, IF-1 and N-formylmethionyl-tRNA(fMet); mRNA recruitment can occur at any time during PIC assembly.

Its subcellular location is the cytoplasm. One of the essential components for the initiation of protein synthesis. Stabilizes the binding of IF-2 and IF-3 on the 30S subunit to which N-formylmethionyl-tRNA(fMet) subsequently binds. Helps modulate mRNA selection, yielding the 30S pre-initiation complex (PIC). Upon addition of the 50S ribosomal subunit IF-1, IF-2 and IF-3 are released leaving the mature 70S translation initiation complex. This Dehalococcoides mccartyi (strain ATCC BAA-2266 / KCTC 15142 / 195) (Dehalococcoides ethenogenes (strain 195)) protein is Translation initiation factor IF-1.